The chain runs to 472 residues: L-fuculokinase (472 aa).

Belongs to the FGGY kinase family. It depends on a divalent metal cation as a cofactor.

The catalysed reaction is L-fuculose + ATP = L-fuculose 1-phosphate + ADP + H(+). Its pathway is carbohydrate degradation; L-fucose degradation; L-lactaldehyde and glycerone phosphate from L-fucose: step 2/3. Catalyzes the phosphorylation of L-fuculose. Can also phosphorylate, with lower efficiency, D-ribulose, D-xylulose and D-fructose. The sequence is that of L-fuculokinase from Escherichia coli (strain K12).